The following is a 113-amino-acid chain: Endoribonuclease SymE (113 aa).

The 46-residue stretch at 29 to 74 (SRYPDYSRIPAITLKGQWLEAAGFATGTAVDVKVMEGCIVLTAQPA) folds into the SpoVT-AbrB domain.

The protein belongs to the SymE family.

It localises to the cytoplasm. Involved in the degradation and recycling of damaged RNA. It is itself a target for degradation by the ATP-dependent protease Lon. This is Endoribonuclease SymE from Shigella flexneri serotype 5b (strain 8401).